Here is a 380-residue protein sequence, read N- to C-terminus: All-trans-retinol dehydrogenase [NAD(+)] ADH4 (380 aa).

Cys47 contacts Zn(2+). His48–Thr49 is an NAD(+) binding site. Zn(2+)-binding residues include His69, Cys99, Cys102, Cys105, and Cys113. Residue Ser121 is modified to Phosphoserine. A Zn(2+)-binding site is contributed by Cys180. Residues Gly205–Gly210, Asp229, and Lys234 each bind NAD(+). The residue at position 278 (Ser278) is a Phosphoserine. Residues Ile298–Val300, Thr323–Phe325, and Arg375 each bind NAD(+).

It belongs to the zinc-containing alcohol dehydrogenase family. Class-II subfamily. In terms of assembly, homodimer. Zn(2+) serves as cofactor.

The protein localises to the cytoplasm. The catalysed reaction is all-trans-retinol + NAD(+) = all-trans-retinal + NADH + H(+). The enzyme catalyses 9-cis-retinol + NAD(+) = 9-cis-retinal + NADH + H(+). It catalyses the reaction 20-oxo-(5Z,8Z,11Z,14Z)-eicosatetraenoate + NAD(+) + H2O = (5Z,8Z,11Z,14Z)-eicosatetraenedioate + NADH + 2 H(+). It carries out the reaction 20-hydroxy-(5Z,8Z,11Z,14Z)-eicosatetraenoate + NAD(+) = 20-oxo-(5Z,8Z,11Z,14Z)-eicosatetraenoate + NADH + H(+). The catalysed reaction is 1,4-benzoquinone + NADH + H(+) = hydroquinone + NAD(+). Its activity is regulated as follows. Oxydation of 20-HETE is inhibited by low concentrations of N-heptylformamide. Oxydation of 20-HETE is a decreased by 55-65% by either all-trans-retinol or all-trans-retinoic acid. Strongly inhibited by omega-hydroxy fatty acids. Its function is as follows. Catalyzes the NAD-dependent oxidation of either all-trans-retinol or 9-cis-retinol. Also oxidizes long chain omega-hydroxy fatty acids, such as 20-HETE, producing both the intermediate aldehyde, 20-oxoarachidonate and the end product, a dicarboxylic acid, (5Z,8Z,11Z,14Z)-eicosatetraenedioate. Also catalyzes the reduction of benzoquinones. The sequence is that of All-trans-retinol dehydrogenase [NAD(+)] ADH4 from Homo sapiens (Human).